Reading from the N-terminus, the 161-residue chain is MGEMIKVGMADMNVCKPPDSITTLGLGSCVGIVLYDPGKKVSGMVHVMLPDSTKIKNNENIAKFADTGIDELVRRLLVLGATRSSLVAKIAGGAQMFAFSSNNDMLRVGERNVEATKEKLNSLRIPILAQDTGLNYGRTIEFNPESSELLIKSVGKPQKKI.

Belongs to the CheD family.

It catalyses the reaction L-glutaminyl-[protein] + H2O = L-glutamyl-[protein] + NH4(+). In terms of biological role, probably deamidates glutamine residues to glutamate on methyl-accepting chemotaxis receptors (MCPs), playing an important role in chemotaxis. This chain is Probable chemoreceptor glutamine deamidase CheD, found in Lachnoclostridium phytofermentans (strain ATCC 700394 / DSM 18823 / ISDg) (Clostridium phytofermentans).